We begin with the raw amino-acid sequence, 289 residues long: MYG1 protein TC_0665 (289 aa).

It belongs to the MYG1 family.

The polypeptide is MYG1 protein TC_0665 (Chlamydia muridarum (strain MoPn / Nigg)).